A 139-amino-acid polypeptide reads, in one-letter code: Putative translationally-controlled tumor protein-like protein TPT1P8 (139 aa).

Residues Met-1–Thr-139 enclose the TCTP domain. A compositionally biased stretch (polar residues) spans Thr-40–Asn-51. A disordered region spans residues Thr-40 to Glu-60.

Belongs to the TCTP family.

The polypeptide is Putative translationally-controlled tumor protein-like protein TPT1P8 (TPT1P8) (Homo sapiens (Human)).